Here is a 543-residue protein sequence, read N- to C-terminus: CTP synthase (543 aa).

An amidoligase domain region spans residues 1-267 (MKQTKYIFVT…LNPIAEILDL (267 aa)). Ser-15 is a CTP binding site. Position 15 (Ser-15) interacts with UTP. ATP-binding positions include 16–21 (SLGKGI) and Asp-73. Positions 73 and 141 each coordinate Mg(2+). CTP is bound by residues 148–150 (DIE), 188–193 (KTKPTQ), and Lys-224. UTP contacts are provided by residues 188–193 (KTKPTQ) and Lys-224. Residues 292–543 (KIAFVGKYVD…IKAAINYEDN (252 aa)) form the Glutamine amidotransferase type-1 domain. Gly-354 contributes to the L-glutamine binding site. Cys-381 (nucleophile; for glutamine hydrolysis) is an active-site residue. L-glutamine is bound by residues 382 to 385 (LGMQ), Glu-405, and Arg-473. Catalysis depends on residues His-516 and Glu-518.

It belongs to the CTP synthase family. As to quaternary structure, homotetramer.

It carries out the reaction UTP + L-glutamine + ATP + H2O = CTP + L-glutamate + ADP + phosphate + 2 H(+). It catalyses the reaction L-glutamine + H2O = L-glutamate + NH4(+). The enzyme catalyses UTP + NH4(+) + ATP = CTP + ADP + phosphate + 2 H(+). Its pathway is pyrimidine metabolism; CTP biosynthesis via de novo pathway; CTP from UDP: step 2/2. With respect to regulation, allosterically activated by GTP, when glutamine is the substrate; GTP has no effect on the reaction when ammonia is the substrate. The allosteric effector GTP functions by stabilizing the protein conformation that binds the tetrahedral intermediate(s) formed during glutamine hydrolysis. Inhibited by the product CTP, via allosteric rather than competitive inhibition. Its function is as follows. Catalyzes the ATP-dependent amination of UTP to CTP with either L-glutamine or ammonia as the source of nitrogen. Regulates intracellular CTP levels through interactions with the four ribonucleotide triphosphates. The chain is CTP synthase from Campylobacter jejuni subsp. doylei (strain ATCC BAA-1458 / RM4099 / 269.97).